The sequence spans 49 residues: Cytochrome b559 subunit beta (49 aa).

The helical transmembrane segment at 24-40 (WLAVHVLGVPTVFFLGA) threads the bilayer. His28 contributes to the heme binding site.

This sequence belongs to the PsbE/PsbF family. Heterodimer of an alpha subunit and a beta subunit. PSII is composed of 1 copy each of membrane proteins PsbA, PsbB, PsbC, PsbD, PsbE, PsbF, PsbH, PsbI, PsbJ, PsbK, PsbL, PsbM, PsbT, PsbX, PsbY, Psb30/Ycf12, peripheral proteins PsbO, CyanoQ (PsbQ), PsbU, PsbV and a large number of cofactors. It forms dimeric complexes. Heme b serves as cofactor.

The protein localises to the cellular thylakoid membrane. Its function is as follows. This b-type cytochrome is tightly associated with the reaction center of photosystem II (PSII). PSII is a light-driven water:plastoquinone oxidoreductase that uses light energy to abstract electrons from H(2)O, generating O(2) and a proton gradient subsequently used for ATP formation. It consists of a core antenna complex that captures photons, and an electron transfer chain that converts photonic excitation into a charge separation. The chain is Cytochrome b559 subunit beta from Prochlorococcus marinus (strain MIT 9303).